Consider the following 180-residue polypeptide: Adenine phosphoribosyltransferase (180 aa).

It belongs to the purine/pyrimidine phosphoribosyltransferase family. In terms of assembly, homodimer.

It is found in the cytoplasm. The catalysed reaction is AMP + diphosphate = 5-phospho-alpha-D-ribose 1-diphosphate + adenine. It participates in purine metabolism; AMP biosynthesis via salvage pathway; AMP from adenine: step 1/1. In terms of biological role, catalyzes a salvage reaction resulting in the formation of AMP, that is energically less costly than de novo synthesis. The chain is Adenine phosphoribosyltransferase from Rhizobium meliloti (strain 1021) (Ensifer meliloti).